The following is a 209-amino-acid chain: Uracil phosphoribosyltransferase (209 aa).

Residues Arg79, Arg104, and Asp131 to Ser139 each bind 5-phospho-alpha-D-ribose 1-diphosphate. Uracil-binding positions include Ile194 and Gly199–Ala201. A 5-phospho-alpha-D-ribose 1-diphosphate-binding site is contributed by Asp200.

It belongs to the UPRTase family. As to quaternary structure, homodimer. Requires Mg(2+) as cofactor.

It carries out the reaction UMP + diphosphate = 5-phospho-alpha-D-ribose 1-diphosphate + uracil. The protein operates within pyrimidine metabolism; UMP biosynthesis via salvage pathway; UMP from uracil: step 1/1. With respect to regulation, allosterically activated by GTP. In terms of biological role, catalyzes the conversion of uracil and 5-phospho-alpha-D-ribose 1-diphosphate (PRPP) to UMP and diphosphate. This Bacillus caldolyticus protein is Uracil phosphoribosyltransferase.